The sequence spans 144 residues: MTRKQKRLAVIGSGMGFLALAAALTFYALGQQTSYFYMPSDLLSQPAAAQERIRLGGLVQQGSVERGQGTHVSFVVADGQNGVPVVYDGILPDLFREEQGVVIEGRMGPDGVFVADTVLAKHDETYMPREVADRLKKDGLWQEQ.

The Cytoplasmic portion of the chain corresponds to 1–7; that stretch reads MTRKQKR. The chain crosses the membrane as a helical; Signal-anchor for type II membrane protein span at residues 8 to 28; it reads LAVIGSGMGFLALAAALTFYA. Residues 29–144 lie on the Periplasmic side of the membrane; the sequence is LGQQTSYFYM…LKKDGLWQEQ (116 aa). Heme-binding residues include histidine 122 and tyrosine 126.

It belongs to the CcmE/CycJ family.

It localises to the cell inner membrane. Heme chaperone required for the biogenesis of c-type cytochromes. Transiently binds heme delivered by CcmC and transfers the heme to apo-cytochromes in a process facilitated by CcmF and CcmH. In Chelativorans sp. (strain BNC1), this protein is Cytochrome c-type biogenesis protein CcmE.